Reading from the N-terminus, the 298-residue chain is ATP synthase gamma chain (298 aa).

Belongs to the ATPase gamma chain family. F-type ATPases have 2 components, CF(1) - the catalytic core - and CF(0) - the membrane proton channel. CF(1) has five subunits: alpha(3), beta(3), gamma(1), delta(1), epsilon(1). CF(0) has three main subunits: a, b and c.

It localises to the cell inner membrane. Its function is as follows. Produces ATP from ADP in the presence of a proton gradient across the membrane. The gamma chain is believed to be important in regulating ATPase activity and the flow of protons through the CF(0) complex. This chain is ATP synthase gamma chain, found in Francisella tularensis subsp. holarctica (strain FTNF002-00 / FTA).